We begin with the raw amino-acid sequence, 193 residues long: Protein PrsJ (193 aa).

Positions 1-27 (MVVNKTTAVLYLIALSLSGFIHTFLRA) are cleaved as a signal peptide.

It is found in the periplasm. Its function is as follows. This protein maintains pilus integrity and thus is an important participant in pilus assembly. It may function as molecular chaperone directly or indirectly in the correct assembly of PapA subunits. In Escherichia coli, this protein is Protein PrsJ (prsJ).